Consider the following 631-residue polypeptide: MGKVIGIDLGTTNSCVAVMEGKEPKVIENSEGERTTPSIIAFANGEKLVGQSAKRQAVTNPRNTVYAVKRLIGRNFTDPMVKKDQEIVPYNIVKADNGDAWVEVEGKKHSPSQISAFILQKMKETAENYLGEKVTQAVITVPAYFNDAQRQATKDAGKIAGLEVLRIINEPTAAALAYGFDKSASKTIAVYDLGGGTFDVSILEIGDGVFEVKSTNGDTFLGGEDFDTRILEHLINTFKKESGIDLRNDPLALQRLKEAAEKAKKELSSALTTDINLPYITADNSGPKHLNIKFTRAELEKLVDDLIEKTIEPCRKALKDAGLKASDIQEVVLVGGMTRMPKVQEAVEKFFGRALHKGVNPDEVVALGAAIQGGVLNKEVTDILLLDVTPLSLGIETLGGVFTRLIDRNTTIPSKKSQVFSTADDNQHAVTIRVFQGEREMAKDNKMLGQFNLEGIPPAPRGVPQIEVTFDIDANGIVHVSAKDKASGKEQRVTIQASGGLSDAEIEQMVKDAEKNADEDKKHKELIEAKNAADSLIYSTEKTLTDYSDKLSSEDKGGVEEALSALKAVLDSEDASLIKEKTESLTAASMKIGEAMYKAQSDAGAAGSASEENTTSNEKVVDADFEDVEKK.

T197 bears the Phosphothreonine; by autocatalysis mark. Residues 599-631 (AQSDAGAAGSASEENTTSNEKVVDADFEDVEKK) are disordered. Positions 603–612 (AGAAGSASEE) are enriched in low complexity.

This sequence belongs to the heat shock protein 70 family.

Functionally, acts as a chaperone. The chain is Chaperone protein DnaK from Rickettsia bellii (strain RML369-C).